The chain runs to 405 residues: DNA polymerase IV 1 (405 aa).

The UmuC domain occupies 23 to 203; it reads IAHIDCDAFY…RPVTTIWGVG (181 aa). Mg(2+) is bound by residues Asp27 and Asp120. The active site involves Glu121.

It belongs to the DNA polymerase type-Y family. As to quaternary structure, monomer. The cofactor is Mg(2+).

Its subcellular location is the cytoplasm. It carries out the reaction DNA(n) + a 2'-deoxyribonucleoside 5'-triphosphate = DNA(n+1) + diphosphate. Poorly processive, error-prone DNA polymerase involved in untargeted mutagenesis. Copies undamaged DNA at stalled replication forks, which arise in vivo from mismatched or misaligned primer ends. These misaligned primers can be extended by PolIV. Exhibits no 3'-5' exonuclease (proofreading) activity. May be involved in translesional synthesis, in conjunction with the beta clamp from PolIII. The polypeptide is DNA polymerase IV 1 (dinB1) (Agrobacterium fabrum (strain C58 / ATCC 33970) (Agrobacterium tumefaciens (strain C58))).